The chain runs to 275 residues: NH(3)-dependent NAD(+) synthetase (275 aa).

ATP is bound at residue 39–46 (GLSGGVDS). Mg(2+) is bound at residue Asp45. Arg124 is a binding site for deamido-NAD(+). Position 144 (Thr144) interacts with ATP. Mg(2+) is bound at residue Glu149. 2 residues coordinate deamido-NAD(+): Lys157 and Asp164. The ATP site is built by Lys173 and Ser195. 255–256 (HK) serves as a coordination point for deamido-NAD(+).

The protein belongs to the NAD synthetase family. Homodimer.

The enzyme catalyses deamido-NAD(+) + NH4(+) + ATP = AMP + diphosphate + NAD(+) + H(+). It participates in cofactor biosynthesis; NAD(+) biosynthesis; NAD(+) from deamido-NAD(+) (ammonia route): step 1/1. Its function is as follows. Catalyzes the ATP-dependent amidation of deamido-NAD to form NAD. Uses ammonia as a nitrogen source. The protein is NH(3)-dependent NAD(+) synthetase of Staphylothermus marinus (strain ATCC 43588 / DSM 3639 / JCM 9404 / F1).